The following is a 193-amino-acid chain: Molybdenum cofactor guanylyltransferase (193 aa).

GTP-binding positions include 8–10, Lys-21, Asp-67, and Asp-98; that span reads LAG. Mg(2+) is bound at residue Asp-98.

The protein belongs to the MobA family. As to quaternary structure, monomer. Requires Mg(2+) as cofactor.

It localises to the cytoplasm. It carries out the reaction Mo-molybdopterin + GTP + H(+) = Mo-molybdopterin guanine dinucleotide + diphosphate. Its function is as follows. Transfers a GMP moiety from GTP to Mo-molybdopterin (Mo-MPT) cofactor (Moco or molybdenum cofactor) to form Mo-molybdopterin guanine dinucleotide (Mo-MGD) cofactor. This is Molybdenum cofactor guanylyltransferase from Cereibacter sphaeroides (strain ATCC 17029 / ATH 2.4.9) (Rhodobacter sphaeroides).